An 893-amino-acid chain; its full sequence is TBC domain-containing protein kinase-like protein (893 aa).

A Protein kinase domain is found at 1–273 (MFPLKDAEMG…PDELMKDQVF (273 aa)). Residues 466-651 (DIPPLMRGLT…HLWDTLLLGN (186 aa)) enclose the Rab-GAP TBC domain.

The protein belongs to the protein kinase superfamily. Component of the FERRY complex composed of five subunits, TBCK, PPP1R21, FERRY3, CRYZL1 and GATD1 with a ratio of 1:2:1:2:4, respectively.

The protein localises to the cytoplasm. Its subcellular location is the cytoskeleton. The protein resides in the spindle. It localises to the midbody. It is found in the early endosome. Its function is as follows. Component of the FERRY complex (Five-subunit Endosomal Rab5 and RNA/ribosome intermediary). The FERRY complex directly interacts with mRNAs and RAB5A, and functions as a RAB5A effector involved in the localization and the distribution of specific mRNAs most likely by mediating their endosomal transport. The complex recruits mRNAs and ribosomes to early endosomes through direct mRNA-interaction. Also involved in the modulation of mTOR signaling and expression of mTOR complex components. Involved in the control of actin-cytoskeleton organization. This is TBC domain-containing protein kinase-like protein (Tbck) from Mus musculus (Mouse).